A 132-amino-acid chain; its full sequence is Mite allergen Der p 5 (132 aa).

Immunodominant conformational IgE-binding epitope stretches follow at residues 25 to 53 and 102 to 132; these read DYQNEFDFLLMERIHEQIKKGELALFYLQ and EQYNLEMAKKSGDILERDLKKEEARVKKIEV.

It belongs to the mite group 5 allergen family. In terms of assembly, monomer. Trimer of homodimers. Oligomerizes in a concentration-dependent manner.

This is Mite allergen Der p 5 (DERP5) from Dermatophagoides pteronyssinus (European house dust mite).